The chain runs to 803 residues: Nuclear factor of activated T-cells, cytoplasmic 1 (803 aa).

Residues 101–106 are calcineurin-binding; that stretch reads PRIEIT. The tract at residues 109–199 is transactivation domain A (TAD-A); that stretch reads LGLHHNSSQF…CVSPKTTDPE (91 aa). Residues 181-195 are compositionally biased toward polar residues; sequence PQTSPWQSPCVSPKT. The segment at 181–279 is disordered; the sequence is PQTSPWQSPC…GSPRVSVTDD (99 aa). 2 consecutive repeat copies span residues 184–200 and 214–230. The tract at residues 184–279 is 3 X SP repeats; the sequence is SPWQSPCVSP…GSPRVSVTDD (96 aa). A phosphoserine mark is found at Ser-214 and Ser-218. Residues 214–231 are compositionally biased toward low complexity; that stretch reads SPRHSPSTSPRTSVTEES. Ser-226 bears the Phosphoserine; by PKA mark. Positions 246–248 match the Nuclear localization signal motif; it reads KRK. Residues 263–279 form repeat 3; that stretch reads SPTPSPQGSPRVSVTDD. Ser-275 is subject to Phosphoserine; by PKA. The Nuclear export signal motif lies at 291-302; the sequence is SAIVAAINALST. One can recognise an RHD domain in the interval 389–571; sequence PSLPALDWQL…NPIECSQRSA (183 aa). A DNA-binding region spans residues 418–425; that stretch reads RAHYETEG. A Nuclear localization signal motif is present at residues 661–663; that stretch reads KRK. The interval 723–803 is disordered; that stretch reads LMPGFPPRPQ…QPQVSPTSSG (81 aa). Pro residues predominate over residues 778–792; it reads SGVPPGPPQPPPPTL. Over residues 793–803 the composition is skewed to low complexity; the sequence is LQPQVSPTSSG.

In terms of assembly, member of the multicomponent NFATC transcription complex that consists of at least two components, a pre-existing cytoplasmic component NFATC2 and an inducible nuclear component NFATC1. Other members such as NFATC4, NFATC3 or members of the activating protein-1 family, MAF, GATA4 and Cbp/p300 can also bind the complex. NFATC proteins bind to DNA as monomers. Interacts with HOMER2 and HOMER3; this interaction may compete with calcineurin/PPP3CA-binding and hence prevent NFATC1 dephosphorylation and activation. Interacts with TLE6/GRG6. In terms of processing, phosphorylated by NFATC-kinase and GSK3B; phosphorylation induces NFATC1 nuclear exit and dephosphorylation by calcineurin promotes nuclear import. Phosphorylation by PKA and DYRK2 negatively modulates nuclear accumulation, and promotes subsequent phosphorylation by GSK3B or casein kinase 1.

Its subcellular location is the cytoplasm. It is found in the nucleus. Its function is as follows. Plays a role in the inducible expression of cytokine genes in T-cells, especially in the induction of the IL-2 or IL-4 gene transcription. Also controls gene expression in embryonic cardiac cells. Could regulate not only the activation and proliferation but also the differentiation and programmed death of T-lymphocytes as well as lymphoid and non-lymphoid cells. Required for osteoclastogenesis and regulates many genes important for osteoclast differentiation and function. This chain is Nuclear factor of activated T-cells, cytoplasmic 1, found in Bos taurus (Bovine).